Here is a 100-residue protein sequence, read N- to C-terminus: NADH-quinone oxidoreductase subunit K (100 aa).

A run of 3 helical transmembrane segments spans residues 4-24, 28-48, and 60-80; these read LQHG…GLVI, LLFM…AFVV, and VMYI…LALL.

It belongs to the complex I subunit 4L family. As to quaternary structure, NDH-1 is composed of 13 different subunits. Subunits NuoA, H, J, K, L, M, N constitute the membrane sector of the complex.

The protein resides in the cell inner membrane. The catalysed reaction is a quinone + NADH + 5 H(+)(in) = a quinol + NAD(+) + 4 H(+)(out). Its function is as follows. NDH-1 shuttles electrons from NADH, via FMN and iron-sulfur (Fe-S) centers, to quinones in the respiratory chain. The immediate electron acceptor for the enzyme in this species is believed to be ubiquinone. Couples the redox reaction to proton translocation (for every two electrons transferred, four hydrogen ions are translocated across the cytoplasmic membrane), and thus conserves the redox energy in a proton gradient. The protein is NADH-quinone oxidoreductase subunit K of Shigella boydii serotype 18 (strain CDC 3083-94 / BS512).